A 259-amino-acid chain; its full sequence is S-methyl-5'-thioadenosine phosphorylase (259 aa).

Residues Ser-9 and 50 to 51 (RH) contribute to the phosphate site. Met-175 provides a ligand contact to substrate. Thr-176 lines the phosphate pocket. Residue 199-201 (DLD) coordinates substrate.

Belongs to the PNP/MTAP phosphorylase family. MTAP subfamily. In terms of assembly, homohexamer. Dimer of a homotrimer.

It catalyses the reaction S-methyl-5'-thioadenosine + phosphate = 5-(methylsulfanyl)-alpha-D-ribose 1-phosphate + adenine. The protein operates within amino-acid biosynthesis; L-methionine biosynthesis via salvage pathway; S-methyl-5-thio-alpha-D-ribose 1-phosphate from S-methyl-5'-thioadenosine (phosphorylase route): step 1/1. Functionally, catalyzes the reversible phosphorylation of S-methyl-5'-thioadenosine (MTA) to adenine and 5-methylthioribose-1-phosphate. Involved in the breakdown of MTA, a major by-product of polyamine biosynthesis. Responsible for the first step in the methionine salvage pathway after MTA has been generated from S-adenosylmethionine. Has broad substrate specificity with 6-aminopurine nucleosides as preferred substrates. The chain is S-methyl-5'-thioadenosine phosphorylase from Mycolicibacterium smegmatis (strain ATCC 700084 / mc(2)155) (Mycobacterium smegmatis).